The primary structure comprises 159 residues: MSIEGVLKEGFVTTTADKLINWTRTGSLWPMTFGLACCAVEMMHAGAARYDLDRFGVVFRPSPRQSDVMIVAGTLCNKMAPALRKVYDQMAEPRWVISMGSCANGGGYYHYSYSVVRGCDRIVPVDVYVPGCPPTAEALVYGVIQLQAKIRRTNTIARQ.

4 residues coordinate [4Fe-4S] cluster: Cys37, Cys38, Cys102, and Cys132.

It belongs to the complex I 20 kDa subunit family. NDH-1 is composed of 14 different subunits. Subunits NuoB, C, D, E, F, and G constitute the peripheral sector of the complex. The cofactor is [4Fe-4S] cluster.

Its subcellular location is the cell inner membrane. It carries out the reaction a quinone + NADH + 5 H(+)(in) = a quinol + NAD(+) + 4 H(+)(out). Its function is as follows. NDH-1 shuttles electrons from NADH, via FMN and iron-sulfur (Fe-S) centers, to quinones in the respiratory chain. Couples the redox reaction to proton translocation (for every two electrons transferred, four hydrogen ions are translocated across the cytoplasmic membrane), and thus conserves the redox energy in a proton gradient. In Paraburkholderia phymatum (strain DSM 17167 / CIP 108236 / LMG 21445 / STM815) (Burkholderia phymatum), this protein is NADH-quinone oxidoreductase subunit B.